The primary structure comprises 1047 residues: Error-prone DNA polymerase (1047 aa).

It belongs to the DNA polymerase type-C family. DnaE2 subfamily.

It is found in the cytoplasm. The catalysed reaction is DNA(n) + a 2'-deoxyribonucleoside 5'-triphosphate = DNA(n+1) + diphosphate. Functionally, DNA polymerase involved in damage-induced mutagenesis and translesion synthesis (TLS). It is not the major replicative DNA polymerase. The protein is Error-prone DNA polymerase of Methylococcus capsulatus (strain ATCC 33009 / NCIMB 11132 / Bath).